The chain runs to 668 residues: tRNA 5-methylaminomethyl-2-thiouridine biosynthesis bifunctional protein MnmC (668 aa).

The tract at residues 1-245 (MKHYSIQPAN…KREMLCGVME (245 aa)) is tRNA (mnm(5)s(2)U34)-methyltransferase. The FAD-dependent cmnm(5)s(2)U34 oxidoreductase stretch occupies residues 270–668 (IGGGIASALL…LLKGKAVKAG (399 aa)).

The protein in the N-terminal section; belongs to the methyltransferase superfamily. tRNA (mnm(5)s(2)U34)-methyltransferase family. This sequence in the C-terminal section; belongs to the DAO family. Requires FAD as cofactor.

Its subcellular location is the cytoplasm. It catalyses the reaction 5-aminomethyl-2-thiouridine(34) in tRNA + S-adenosyl-L-methionine = 5-methylaminomethyl-2-thiouridine(34) in tRNA + S-adenosyl-L-homocysteine + H(+). Functionally, catalyzes the last two steps in the biosynthesis of 5-methylaminomethyl-2-thiouridine (mnm(5)s(2)U) at the wobble position (U34) in tRNA. Catalyzes the FAD-dependent demodification of cmnm(5)s(2)U34 to nm(5)s(2)U34, followed by the transfer of a methyl group from S-adenosyl-L-methionine to nm(5)s(2)U34, to form mnm(5)s(2)U34. This Escherichia coli (strain UTI89 / UPEC) protein is tRNA 5-methylaminomethyl-2-thiouridine biosynthesis bifunctional protein MnmC.